The primary structure comprises 91 residues: MTDVLVVVKVFPESDEVNLDNLYEEIGKKLPAGYKLVRKETEPIAYGLKALIAYVQMPENVEGGTDTLEEIINSIQGVSHAEVVGITRLGF.

The protein belongs to the EF-1-beta/EF-1-delta family.

Functionally, promotes the exchange of GDP for GTP in EF-1-alpha/GDP, thus allowing the regeneration of EF-1-alpha/GTP that could then be used to form the ternary complex EF-1-alpha/GTP/AAtRNA. In Sulfurisphaera tokodaii (strain DSM 16993 / JCM 10545 / NBRC 100140 / 7) (Sulfolobus tokodaii), this protein is Elongation factor 1-beta.